A 244-amino-acid polypeptide reads, in one-letter code: UPF0173 metal-dependent hydrolase RoseRS_3945 (244 aa).

The protein belongs to the UPF0173 family.

This chain is UPF0173 metal-dependent hydrolase RoseRS_3945, found in Roseiflexus sp. (strain RS-1).